The following is a 396-amino-acid chain: Ribosomal RNA large subunit methyltransferase I (396 aa).

The region spanning 2–81 (TVRLILAKGR…EVIDCAFFIR (80 aa)) is the PUA domain.

This sequence belongs to the methyltransferase superfamily. RlmI family.

It localises to the cytoplasm. The catalysed reaction is cytidine(1962) in 23S rRNA + S-adenosyl-L-methionine = 5-methylcytidine(1962) in 23S rRNA + S-adenosyl-L-homocysteine + H(+). In terms of biological role, specifically methylates the cytosine at position 1962 (m5C1962) of 23S rRNA. The protein is Ribosomal RNA large subunit methyltransferase I of Yersinia pestis bv. Antiqua (strain Antiqua).